The primary structure comprises 298 residues: Flavin-dependent thymidylate synthase (298 aa).

The ThyX domain maps to 41-251 (GFVRLVDYMG…PLTYAAFVEY (211 aa)). FAD-binding positions include Thr-87, 110–112 (RHR), and Glu-118. DUMP contacts are provided by residues 107-110 (QWVR), 118-122 (EYSAR), and Arg-190. A ThyX motif motif is present at residues 110-120 (RHRTANVNEYS). FAD is bound by residues 206-208 (DLH) and His-212. Arg-217 serves as a coordination point for dUMP. The active-site Involved in ionization of N3 of dUMP, leading to its activation is the Arg-217.

The protein belongs to the thymidylate synthase ThyX family. Homotetramer. FAD serves as cofactor.

It carries out the reaction dUMP + (6R)-5,10-methylene-5,6,7,8-tetrahydrofolate + NADPH + H(+) = dTMP + (6S)-5,6,7,8-tetrahydrofolate + NADP(+). The protein operates within pyrimidine metabolism; dTTP biosynthesis. Its function is as follows. Catalyzes the reductive methylation of 2'-deoxyuridine-5'-monophosphate (dUMP) to 2'-deoxythymidine-5'-monophosphate (dTMP) while utilizing 5,10-methylenetetrahydrofolate (mTHF) as the methyl donor, and NADPH and FADH(2) as the reductant. The sequence is that of Flavin-dependent thymidylate synthase from Ehrlichia ruminantium (strain Welgevonden).